Consider the following 739-residue polypeptide: Phosphoribosylformylglycinamidine synthase subunit PurL (739 aa).

Residue His54 is part of the active site. Residues Tyr57 and Lys96 each coordinate ATP. Position 98 (Glu98) interacts with Mg(2+). Substrate is bound by residues 99–102 and Arg121; that span reads SHNH. The Proton acceptor role is filled by His100. Asp122 serves as a coordination point for Mg(2+). Gln245 contributes to the substrate binding site. Residue Asp273 coordinates Mg(2+). 317-319 contributes to the substrate binding site; it reads ESQ. The ATP site is built by Asp500 and Gly537. Mg(2+) is bound at residue Asn538. Position 540 (Ser540) interacts with substrate.

This sequence belongs to the FGAMS family. Monomer. Part of the FGAM synthase complex composed of 1 PurL, 1 PurQ and 2 PurS subunits.

Its subcellular location is the cytoplasm. The catalysed reaction is N(2)-formyl-N(1)-(5-phospho-beta-D-ribosyl)glycinamide + L-glutamine + ATP + H2O = 2-formamido-N(1)-(5-O-phospho-beta-D-ribosyl)acetamidine + L-glutamate + ADP + phosphate + H(+). Its pathway is purine metabolism; IMP biosynthesis via de novo pathway; 5-amino-1-(5-phospho-D-ribosyl)imidazole from N(2)-formyl-N(1)-(5-phospho-D-ribosyl)glycinamide: step 1/2. Its function is as follows. Part of the phosphoribosylformylglycinamidine synthase complex involved in the purines biosynthetic pathway. Catalyzes the ATP-dependent conversion of formylglycinamide ribonucleotide (FGAR) and glutamine to yield formylglycinamidine ribonucleotide (FGAM) and glutamate. The FGAM synthase complex is composed of three subunits. PurQ produces an ammonia molecule by converting glutamine to glutamate. PurL transfers the ammonia molecule to FGAR to form FGAM in an ATP-dependent manner. PurS interacts with PurQ and PurL and is thought to assist in the transfer of the ammonia molecule from PurQ to PurL. This Bacillus cereus (strain B4264) protein is Phosphoribosylformylglycinamidine synthase subunit PurL.